Consider the following 118-residue polypeptide: UPF0295 protein BA_0538/GBAA_0538/BAS0506 (118 aa).

The next 2 membrane-spanning stretches (helical) occupy residues 12–32 and 43–63; these read IRTFALSLVFIGLFIAYLGVF and FMMVGFLAVIASTVVYFWIGM.

It belongs to the UPF0295 family.

It is found in the cell membrane. The chain is UPF0295 protein BA_0538/GBAA_0538/BAS0506 from Bacillus anthracis.